A 353-amino-acid chain; its full sequence is Farnesyl pyrophosphate synthase (353 aa).

Positions 57, 60, and 96 each coordinate isopentenyl diphosphate. The residue at position 57 (K57) is an N6-(2-hydroxyisobutyryl)lysine; alternate. Position 57 is an N6-acetyllysine; alternate (K57). Mg(2+) is bound by residues D103 and D107. R112 serves as a coordination point for dimethylallyl diphosphate. R113 lines the isopentenyl diphosphate pocket. Dimethylallyl diphosphate is bound by residues K200, T201, Q240, K257, and K266.

This sequence belongs to the FPP/GGPP synthase family. In terms of assembly, homodimer. Interacts with RSAD2. Mg(2+) serves as cofactor.

It localises to the cytoplasm. The catalysed reaction is isopentenyl diphosphate + dimethylallyl diphosphate = (2E)-geranyl diphosphate + diphosphate. The enzyme catalyses isopentenyl diphosphate + (2E)-geranyl diphosphate = (2E,6E)-farnesyl diphosphate + diphosphate. It participates in isoprenoid biosynthesis; farnesyl diphosphate biosynthesis; farnesyl diphosphate from geranyl diphosphate and isopentenyl diphosphate: step 1/1. The protein operates within isoprenoid biosynthesis; geranyl diphosphate biosynthesis; geranyl diphosphate from dimethylallyl diphosphate and isopentenyl diphosphate: step 1/1. Inactivated by interferon-induced RSAD2. This inactivation may result of disruption of lipid rafts at the plasma membrane, and thus have an antiviral effect since many enveloped viruses need lipid rafts to bud efficiently out of the cell. Key enzyme in isoprenoid biosynthesis which catalyzes the formation of farnesyl diphosphate (FPP), a precursor for several classes of essential metabolites including sterols, dolichols, carotenoids, and ubiquinones. FPP also serves as substrate for protein farnesylation and geranylgeranylation. Catalyzes the sequential condensation of isopentenyl pyrophosphate with the allylic pyrophosphates, dimethylallyl pyrophosphate, and then with the resultant geranylpyrophosphate to the ultimate product farnesyl pyrophosphate. The polypeptide is Farnesyl pyrophosphate synthase (Fdps) (Mus musculus (Mouse)).